We begin with the raw amino-acid sequence, 403 residues long: TBC1 domain family member 20 (403 aa).

The interval 1 to 25 is disordered; sequence MALRSAQGDGPTSGHWDGGAEKADF. The region spanning 60 to 246 is the Rab-GAP TBC domain; the sequence is LLTDEIRRKV…RLYDFFLACH (187 aa). 2 helical membrane passes run 238–258 and 367–387; these read LYDF…AVIV and FVKL…LAVV.

In terms of assembly, (Microbial infection) Directly interacts with the N-terminal amphipathic helix of hepatitis C virus (HCV) NS5A.

Its subcellular location is the membrane. GTPase-activating protein (GAP) specific for Rab1 and Rab2 small GTPase families for which it can accelerate the intrinsic GTP hydrolysis rate by more than five orders of magnitude. Also shows GAP activity for RAB18 GTPase. Promotes RAB18 dissociation from the endoplasmic reticulum (ER) membrane into the cytosol, probably through stimulating RAB18 GTP-hydrolysis. Involved in maintaining endoplasmic reticulum structure. In Homo sapiens (Human), this protein is TBC1 domain family member 20.